Here is a 50-residue protein sequence, read N- to C-terminus: Photosystem II reaction center protein M (50 aa).

The chain crosses the membrane as a helical span at residues 7-27; it reads GFVASLLFVGVPTIFLIGLFI.

It belongs to the PsbM family. As to quaternary structure, PSII is composed of 1 copy each of membrane proteins PsbA, PsbB, PsbC, PsbD, PsbE, PsbF, PsbH, PsbI, PsbJ, PsbK, PsbL, PsbM, PsbT, PsbX, PsbY, Psb30/Ycf12, peripheral proteins PsbO, CyanoQ (PsbQ), PsbU, PsbV and a large number of cofactors. It forms dimeric complexes.

Its subcellular location is the cellular thylakoid membrane. Functionally, one of the components of the core complex of photosystem II (PSII). PSII is a light-driven water:plastoquinone oxidoreductase that uses light energy to abstract electrons from H(2)O, generating O(2) and a proton gradient subsequently used for ATP formation. It consists of a core antenna complex that captures photons, and an electron transfer chain that converts photonic excitation into a charge separation. This subunit is found at the monomer-monomer interface. The polypeptide is Photosystem II reaction center protein M (Prochlorococcus marinus (strain MIT 9301)).